The chain runs to 80 residues: uncharacterized protein (80 aa).

This is an uncharacterized protein from Methanothermobacter thermautotrophicus (Methanobacterium thermoformicicum).